The following is a 249-amino-acid chain: 5'-nucleotidase SurE (249 aa).

The a divalent metal cation site is built by Asp-8, Asp-9, Ser-39, and Asn-91.

It belongs to the SurE nucleotidase family. Requires a divalent metal cation as cofactor.

It is found in the cytoplasm. It carries out the reaction a ribonucleoside 5'-phosphate + H2O = a ribonucleoside + phosphate. In terms of biological role, nucleotidase that shows phosphatase activity on nucleoside 5'-monophosphates. This chain is 5'-nucleotidase SurE, found in Haemophilus influenzae (strain PittGG).